We begin with the raw amino-acid sequence, 279 residues long: Biotin synthase (279 aa).

Residues 2–232 enclose the Radical SAM core domain; the sequence is VRNSRLDICS…NVTIKIAAGR (231 aa). Positions 20, 24, and 27 each coordinate [4Fe-4S] cluster. Positions 96, 156, and 227 each coordinate [2Fe-2S] cluster.

It belongs to the radical SAM superfamily. Biotin synthase family. Homodimer. It depends on [4Fe-4S] cluster as a cofactor. Requires [2Fe-2S] cluster as cofactor.

The enzyme catalyses (4R,5S)-dethiobiotin + (sulfur carrier)-SH + 2 reduced [2Fe-2S]-[ferredoxin] + 2 S-adenosyl-L-methionine = (sulfur carrier)-H + biotin + 2 5'-deoxyadenosine + 2 L-methionine + 2 oxidized [2Fe-2S]-[ferredoxin]. The protein operates within cofactor biosynthesis; biotin biosynthesis; biotin from 7,8-diaminononanoate: step 2/2. Catalyzes the conversion of dethiobiotin (DTB) to biotin by the insertion of a sulfur atom into dethiobiotin via a radical-based mechanism. The polypeptide is Biotin synthase (Thermotoga neapolitana (strain ATCC 49049 / DSM 4359 / NBRC 107923 / NS-E)).